The primary structure comprises 198 residues: MAEKEKIKRNRREEILQALAQMLESSDGSQRITTAKLAANVGVSEAALYRHFPSKTRMFDSLIEFIEDSLITRINLILQDEKETFNRLRLILLLVLGFAERNPGLTRIMTGHALMFEQDRLQGRINQLFERIEAQLRQVLKERKLREGKGFIVDETLLASQLLAFCEGMLSRYVRSEFRYRPTQEFDGRWPLLAAQLQ.

One can recognise an HTH tetR-type domain in the interval arginine 9–leucine 70. Positions threonine 33–phenylalanine 52 form a DNA-binding region, H-T-H motif. Residues glutamate 117–lysine 144 are a coiled coil.

The protein belongs to the nucleoid occlusion factor SlmA family. In terms of assembly, homodimer. Interacts with FtsZ.

The protein resides in the cytoplasm. It is found in the nucleoid. Its function is as follows. Required for nucleoid occlusion (NO) phenomenon, which prevents Z-ring formation and cell division over the nucleoid. Acts as a DNA-associated cell division inhibitor that binds simultaneously chromosomal DNA and FtsZ, and disrupts the assembly of FtsZ polymers. SlmA-DNA-binding sequences (SBS) are dispersed on non-Ter regions of the chromosome, preventing FtsZ polymerization at these regions. The polypeptide is Nucleoid occlusion factor SlmA (Serratia proteamaculans (strain 568)).